We begin with the raw amino-acid sequence, 981 residues long: Mineralocorticoid receptor (981 aa).

The tract at residues Met-1–Ile-603 is modulating. Residues Ser-234–Gly-258 show a composition bias toward polar residues. Disordered stretches follow at residues Ser-234–Val-331 and Ala-355–Pro-376. Ser-250, Ser-259, Ser-283, Ser-287, and Ser-299 each carry phosphoserine. Composition is skewed to low complexity over residues Ser-259 to Pro-300 and Ser-309 to Thr-327. Zn(2+) is bound by residues Cys-604, Cys-607, Cys-621, Cys-624, Cys-640, Cys-646, Cys-656, and Cys-659. 2 NR C4-type zinc fingers span residues Cys-604–Cys-624 and Cys-640–Cys-664. The segment at residues Cys-604–Met-669 is a DNA-binding region (nuclear receptor). A hinge region spans residues Asn-670–Pro-722. Residues Gly-684–Pro-710 form a disordered region. Over residues Gln-691 to Ser-700 the composition is skewed to pro residues. The NR LBD domain occupies Gln-723–Ile-961. Positions 767 and 773 each coordinate 21-hydroxyprogesterone. Aldosterone is bound by residues Asn-767 and Gln-773. Asn-767 and Gln-773 together coordinate progesterone. The interval Lys-779–Lys-782 is important for coactivator binding. 21-hydroxyprogesterone is bound by residues Arg-814 and Thr-942. 2 residues coordinate aldosterone: Arg-814 and Thr-942. The progesterone site is built by Arg-814 and Thr-942.

It belongs to the nuclear hormone receptor family. NR3 subfamily. Heteromultimeric cytoplasmic complex with HSP90, HSP70, and FKBP4, in the absence of ligand. After ligand binding, it translocates to the nucleus and binds to DNA as a homodimer and as a heterodimer with NR3C1. Binds the coactivator NCOA2. May interact with HSD11B2 in the absence of ligand. Binds the coactivators NCOA1, TIF1 and NRIP1. In terms of processing, phosphorylated. As to expression, detected in liver, brain, heart, kidney, colon, aorta, hippocampus, hypothalamus and adrenal fasciculata.

The protein localises to the cytoplasm. The protein resides in the nucleus. Its subcellular location is the endoplasmic reticulum membrane. Its function is as follows. Receptor for both mineralocorticoids (MC) such as aldosterone and glucocorticoids (GC) such as corticosterone or cortisol. Binds to mineralocorticoid response elements (MRE) and transactivates target genes. The effect of MC is to increase ion and water transport and thus raise extracellular fluid volume and blood pressure and lower potassium levels. The chain is Mineralocorticoid receptor (Nr3c2) from Rattus norvegicus (Rat).